A 313-amino-acid chain; its full sequence is Nodulation protein D 3 (313 aa).

Positions 6–63 (LDLNLLVALDALMTKRSVTAAARSINLSQPAMSSAIARLRSYFQDELFRMQGRELITT) constitute an HTH lysR-type domain. The segment at residues 23 to 42 (VTAAARSINLSQPAMSSAIA) is a DNA-binding region (H-T-H motif).

Belongs to the LysR transcriptional regulatory family.

In terms of biological role, nodD regulates the expression of the nodABCFE genes which encode other nodulation proteins. NodD is also a negative regulator of its own expression. Binds flavonoids as inducers. In Rhizobium meliloti (strain 1021) (Ensifer meliloti), this protein is Nodulation protein D 3 (nodD3).